A 149-amino-acid chain; its full sequence is Urease accessory protein UreE (149 aa).

It belongs to the UreE family.

The protein localises to the cytoplasm. In terms of biological role, involved in urease metallocenter assembly. Binds nickel. Probably functions as a nickel donor during metallocenter assembly. This chain is Urease accessory protein UreE, found in Synechococcus sp. (strain JA-3-3Ab) (Cyanobacteria bacterium Yellowstone A-Prime).